The sequence spans 234 residues: Sugar fermentation stimulation protein homolog (234 aa).

This sequence belongs to the SfsA family.

The protein is Sugar fermentation stimulation protein homolog of Shewanella sp. (strain ANA-3).